Here is a 101-residue protein sequence, read N- to C-terminus: Small ribosomal subunit protein uS14 (101 aa).

This sequence belongs to the universal ribosomal protein uS14 family. As to quaternary structure, part of the 30S ribosomal subunit. Contacts proteins S3 and S10.

Its function is as follows. Binds 16S rRNA, required for the assembly of 30S particles and may also be responsible for determining the conformation of the 16S rRNA at the A site. In Brucella abortus (strain 2308), this protein is Small ribosomal subunit protein uS14.